A 336-amino-acid chain; its full sequence is Anthranilate phosphoribosyltransferase (336 aa).

5-phospho-alpha-D-ribose 1-diphosphate is bound by residues G79, 82–83, T87, 89–92, 107–115, and S119; these read GD, NISS, and KHGNRSVSS. G79 contacts anthranilate. Mg(2+) is bound at residue S91. An anthranilate-binding site is contributed by N110. Position 165 (R165) interacts with anthranilate. Mg(2+) is bound by residues D223 and E224.

This sequence belongs to the anthranilate phosphoribosyltransferase family. As to quaternary structure, homodimer. Mg(2+) is required as a cofactor.

The enzyme catalyses N-(5-phospho-beta-D-ribosyl)anthranilate + diphosphate = 5-phospho-alpha-D-ribose 1-diphosphate + anthranilate. It functions in the pathway amino-acid biosynthesis; L-tryptophan biosynthesis; L-tryptophan from chorismate: step 2/5. In terms of biological role, catalyzes the transfer of the phosphoribosyl group of 5-phosphorylribose-1-pyrophosphate (PRPP) to anthranilate to yield N-(5'-phosphoribosyl)-anthranilate (PRA). The chain is Anthranilate phosphoribosyltransferase from Tolumonas auensis (strain DSM 9187 / NBRC 110442 / TA 4).